The chain runs to 443 residues: Oxygen-dependent coproporphyrinogen-III oxidase, mitochondrial (443 aa).

Residues 1 to 98 (MALRLGRLGS…EMVPKSSGAR (98 aa)) constitute a mitochondrion transit peptide. Residues 89-112 (EMVPKSSGARSPSPGRREEDGDEL) are disordered. Serine 101 bears the Phosphoserine mark. Residues 103–112 (GRREEDGDEL) are compositionally biased toward basic and acidic residues. Residues 182–191 (VLQDGRVFEK) form an important for dimerization region. Serine 233 contributes to the coproporphyrinogen III binding site. Histidine 247 functions as the Proton donor in the catalytic mechanism. 249–251 (NYR) serves as a coordination point for coproporphyrinogen III. The interval 381 to 417 (YVEFNLLYDRGTKFGLFTPGSRIESILMSLPLTARWE) is important for dimerization. Lysine 393 is modified (N6-acetyllysine; alternate). Lysine 393 bears the N6-succinyllysine; alternate mark. 400 to 402 (GSR) contacts coproporphyrinogen III.

The protein belongs to the aerobic coproporphyrinogen-III oxidase family. Homodimer. As to expression, expressed in erythroid cells. Expressed in liver.

The protein resides in the mitochondrion intermembrane space. The catalysed reaction is coproporphyrinogen III + O2 + 2 H(+) = protoporphyrinogen IX + 2 CO2 + 2 H2O. Its pathway is porphyrin-containing compound metabolism; protoporphyrin-IX biosynthesis; protoporphyrinogen-IX from coproporphyrinogen-III (O2 route): step 1/1. Functionally, involved in the heme biosynthesis. Catalyzes the aerobic oxidative decarboxylation of propionate groups of rings A and B of coproporphyrinogen-III to yield the vinyl groups in protoporphyrinogen-IX. The sequence is that of Oxygen-dependent coproporphyrinogen-III oxidase, mitochondrial (Cpox) from Mus musculus (Mouse).